Reading from the N-terminus, the 50-residue chain is uncharacterized protein (50 aa).

The interval 28–50 (SKLSPVTNGGKTIGKSNKVSKND) is disordered. Over residues 29 to 50 (KLSPVTNGGKTIGKSNKVSKND) the composition is skewed to polar residues.

This is an uncharacterized protein from Haemophilus influenzae (strain ATCC 51907 / DSM 11121 / KW20 / Rd).